The primary structure comprises 291 residues: Inhibitory synaptic factor 1 (291 aa).

The interval 1–25 is disordered; it reads MNIRGAPDLGQPSDDPNSGGERERI. Positions 30–63 form a coiled coil; it reads KMVIGQLEGILRELKEVAKELREVVSQIDKLTSD. 2 disordered regions span residues 120 to 186 and 201 to 291; these read TPSD…ERVR and EEGD…KGKN. Acidic residues predominate over residues 201-213; sequence EEGDGEEVEEEEA. Polar residues predominate over residues 262–284; sequence RNSSTQTVSDKSTQTVLPYTATK.

Belongs to the INSYN1 family. Interacts with GPHN.

Its subcellular location is the postsynaptic density. In terms of biological role, component of the protein machinery at the inhibitory synapses, probably acting as a scaffold. Inhibitory synapses dampen neuronal activity through postsynaptic hyperpolarization. This synaptic inhibition is fundamental for the functioning of the central nervous system, shaping and orchestrating the flow of information through neuronal networks to generate a precise neural code. The protein is Inhibitory synaptic factor 1 (Insyn1) of Rattus norvegicus (Rat).